The following is a 103-amino-acid chain: Large ribosomal subunit protein bL21 (103 aa).

The protein belongs to the bacterial ribosomal protein bL21 family. Part of the 50S ribosomal subunit. Contacts protein L20.

In terms of biological role, this protein binds to 23S rRNA in the presence of protein L20. The chain is Large ribosomal subunit protein bL21 from Mycobacterium marinum (strain ATCC BAA-535 / M).